The primary structure comprises 506 residues: FAD-linked oxidoreductase aurO (506 aa).

The FAD-binding PCMH-type domain occupies 92–260; that stretch reads ITAQPLAICR…AETDVRVYPM (169 aa).

Belongs to the oxygen-dependent FAD-linked oxidoreductase family. In terms of assembly, might be part of an extracellular enzyme complex composed of GIP1, aurF, aurO and aurS. Requires FAD as cofactor.

The protein localises to the secreted. The protein resides in the extracellular space. Its pathway is pigment biosynthesis. Its function is as follows. FAD-linked oxidoreductase; part of the gene cluster that mediates the biosynthesis of aurofusarin, a red mycelium pigment which is acting as a mycotoxin. The first step is performed by the polyketide synthase which condenses one acetyl-CoA and 6 malonyl-CoA units to form the first intermediate, the cyclic heptaketide and yellow pigment YWA1. The C2 hydroxyl group in the pyrone ring of YWA1 is probably formed during ring closure by an aldol-type cyclization reaction. The dehydratase aurZ then acts as the first tailoring enzyme in the aurofusarin biosynthetic pathway by converting YWA1 to nor-rubrofusarin. Nor-rubrofusarin is then methylated to rubrofusarin by the O-methyltransferase aurJ. Rubrofusarin is then transported across the plasma membrane by the rubrofusarin-specific pump aurT for further enzymatic processing by the extracellular complex composed of GIP1, aurF, aurO and aurS to yield aurofusarin. The protein is FAD-linked oxidoreductase aurO of Gibberella zeae (strain ATCC MYA-4620 / CBS 123657 / FGSC 9075 / NRRL 31084 / PH-1) (Wheat head blight fungus).